A 712-amino-acid polypeptide reads, in one-letter code: MLRCAWQNGPRQSNRWLRHLSNQIWKRSYSSKIRNIGILAHIDAGKTTTTERMLFYAGKTRALGEVHRGNTVTDYLTQERERGITICSSAVTFPWNDHRINLLDTPGHIDFTMEVEQSLFAVDGVVVVLDGTAGVEAQTVTVWSQADKHKLPRLIFVNKMDRPDADFDKCVADLKDKLETQPVCLQYPVKNEDGVLAINDVITLERLSWHQKDLGRSYKNVKLEPSDDLRQLQEKRSELIDQLSGLDDELADVVISTESFDKVDNALIERALRRATTQQKVVPVLLGSAYKNVGIQRLMDAVNSYLPAPEERNQIYDCFGTEVAGKVFKIVHDKQRGPLTLIRILRGEIKRGMRLISARGQAEVVSKLYEPLADEYREVSAVQSGDVVICAGLKSTVTDEEDDELDESDELFAIDPQIPDAVYFCSIEPPSVSSQTAMEQALKQLQREDPSLRVSYDSVTGQTVLGGMGELHMDIIKSRILSEYKIDVDLGPLQIAYKETIESPALTTLSVEKEIAGSKQSVSITLEVVKNQAEMFSLDKSPENLPNLNTLRPRILQVLRKGSISALERGPRVGGQVVETQIRLHNATIGRGTADSFVMATAAQCVQKLLSTSGTRLLEPIMALQIVAPSERISGIMADLSRRRALINDVLPKGERNKMILVNAPLAELSGYSSALRTISSGTASMTMQPCGFSSMNSVDESLAERRAQGLE.

A mitochondrion-targeting transit peptide spans 1-29 (MLRCAWQNGPRQSNRWLRHLSNQIWKRSY). The 280-residue stretch at 31–310 (SKIRNIGILA…AVNSYLPAPE (280 aa)) folds into the tr-type G domain. GTP is bound by residues 40–47 (AHIDAGKT), 104–108 (DTPGH), and 158–161 (NKMD).

Belongs to the TRAFAC class translation factor GTPase superfamily. Classic translation factor GTPase family. EF-G/EF-2 subfamily.

The protein localises to the mitochondrion. Functionally, mitochondrial GTPase that mediates the disassembly of ribosomes from messenger RNA at the termination of mitochondrial protein biosynthesis. Not involved in the GTP-dependent ribosomal translocation step during translation elongation. The polypeptide is Ribosome-releasing factor 2, mitochondrial (Drosophila yakuba (Fruit fly)).